We begin with the raw amino-acid sequence, 561 residues long: Oxygen-dependent choline dehydrogenase (561 aa).

Residue 7-36 (DYIIVGAGSAGNVLASRLAEDADVTVLLLE) coordinates FAD. H474 (proton acceptor) is an active-site residue.

The protein belongs to the GMC oxidoreductase family. Requires FAD as cofactor.

The catalysed reaction is choline + A = betaine aldehyde + AH2. It catalyses the reaction betaine aldehyde + NAD(+) + H2O = glycine betaine + NADH + 2 H(+). The protein operates within amine and polyamine biosynthesis; betaine biosynthesis via choline pathway; betaine aldehyde from choline (cytochrome c reductase route): step 1/1. Involved in the biosynthesis of the osmoprotectant glycine betaine. Catalyzes the oxidation of choline to betaine aldehyde and betaine aldehyde to glycine betaine at the same rate. The polypeptide is Oxygen-dependent choline dehydrogenase (Paraburkholderia xenovorans (strain LB400)).